Consider the following 278-residue polypeptide: Large ribosomal subunit protein uL2 (278 aa).

Disordered stretches follow at residues 27–58 (STPE…GGGH) and 224–278 (VVMN…GKKR). A compositionally biased stretch (basic residues) spans 37–58 (LHGKGGRNAHGRITTRHKGGGH). A compositionally biased stretch (basic and acidic residues) spans 253–268 (PEGRTRKPNKPSDKLI). Over residues 269–278 (VRRRRTGKKR) the composition is skewed to basic residues.

This sequence belongs to the universal ribosomal protein uL2 family. In terms of assembly, part of the 50S ribosomal subunit. Forms a bridge to the 30S subunit in the 70S ribosome.

In terms of biological role, one of the primary rRNA binding proteins. Required for association of the 30S and 50S subunits to form the 70S ribosome, for tRNA binding and peptide bond formation. It has been suggested to have peptidyltransferase activity; this is somewhat controversial. Makes several contacts with the 16S rRNA in the 70S ribosome. This is Large ribosomal subunit protein uL2 from Mycobacterium sp. (strain KMS).